The following is a 251-amino-acid chain: Phosphoribosylaminoimidazole-succinocarboxamide synthase (251 aa).

This sequence belongs to the SAICAR synthetase family.

The catalysed reaction is 5-amino-1-(5-phospho-D-ribosyl)imidazole-4-carboxylate + L-aspartate + ATP = (2S)-2-[5-amino-1-(5-phospho-beta-D-ribosyl)imidazole-4-carboxamido]succinate + ADP + phosphate + 2 H(+). Its pathway is purine metabolism; IMP biosynthesis via de novo pathway; 5-amino-1-(5-phospho-D-ribosyl)imidazole-4-carboxamide from 5-amino-1-(5-phospho-D-ribosyl)imidazole-4-carboxylate: step 1/2. This Phenylobacterium zucineum (strain HLK1) protein is Phosphoribosylaminoimidazole-succinocarboxamide synthase.